Consider the following 202-residue polypeptide: Crustacean calcium-binding protein 23 (202 aa).

Ser1 carries the N-acetylserine modification. 4 consecutive EF-hand domains span residues 33–68 (SGLL…FGLD), 69–104 (LSDG…EMTE), 105–140 (PRKK…KTHP), and 148–185 (TEDE…LSKA). Ca(2+) contacts are provided by Asp84, Glu93, Asp118, Asp122, and Asp129.

In terms of assembly, monomer or disulfide-linked dimers. Striated muscle and brain.

Its function is as follows. Possibly acts as a regulatory protein and not as a calcium buffer or transport protein. The polypeptide is Crustacean calcium-binding protein 23 (Faxonius limosus (Spinycheek crayfish)).